Consider the following 379-residue polypeptide: Sporozoite surface protein P36 (379 aa).

The first 33 residues, 1–33 (MAYNIWEEYIMANFHNVYPVVTNLFLFIALSYS), serve as a signal peptide directing secretion. 6-Cys domains follow at residues 69 to 206 (FVFF…VKAN) and 215 to 379 (FIKG…TVES). 3 disulfides stabilise this stretch: Cys-91–Cys-101, Cys-115–Cys-186, and Cys-129–Cys-184. N-linked (GlcNAc...) asparagine glycosylation is found at Asn-98 and Asn-118. Asn-206 carries N-linked (GlcNAc...) asparagine glycosylation. 3 disulfide bridges follow: Cys-219/Cys-243, Cys-257/Cys-360, and Cys-295/Cys-358. Asn-298 and Asn-374 each carry an N-linked (GlcNAc...) asparagine glycan.

The protein localises to the cell surface. It localises to the cell membrane. Functionally, involved in sporozoite infection of hepatocytes and replication therein. This is Sporozoite surface protein P36 (PF36) from Plasmodium falciparum (isolate 3D7).